A 252-amino-acid polypeptide reads, in one-letter code: MRRRIVAGNWKMNGSKDLVKQLVGAVREQSGSVGEDVEVVIIPPAIYLDQVAEQGGGRITTGAQNVSQWQSGAYTGEISAEMARDMGCGYVLVGHSERRQLFGETDSVAAAKVEQVLLSGLVAVLCVGETLAEREADQAEAVVAEQVRSGLSVVADGQWSRVVVAYEPVWAIGTGKTATADDAQAMHSEIRKVLDGMNAPANEISVLYGGSVKADNAAALFAEPDIDGGLIGGASLKAEEFISICRSFPAGV.

9 to 11 (NWK) contacts substrate. Histidine 95 serves as the catalytic Electrophile. The Proton acceptor role is filled by glutamate 167. Residues glycine 173, serine 211, and 232-233 (GG) contribute to the substrate site.

The protein belongs to the triosephosphate isomerase family. In terms of assembly, homodimer.

It is found in the cytoplasm. It catalyses the reaction D-glyceraldehyde 3-phosphate = dihydroxyacetone phosphate. Its pathway is carbohydrate biosynthesis; gluconeogenesis. It participates in carbohydrate degradation; glycolysis; D-glyceraldehyde 3-phosphate from glycerone phosphate: step 1/1. Involved in the gluconeogenesis. Catalyzes stereospecifically the conversion of dihydroxyacetone phosphate (DHAP) to D-glyceraldehyde-3-phosphate (G3P). This chain is Triosephosphate isomerase, found in Marinobacter nauticus (strain ATCC 700491 / DSM 11845 / VT8) (Marinobacter aquaeolei).